Consider the following 61-residue polypeptide: Small ribosomal subunit protein uS14 (61 aa).

Residues cysteine 24, cysteine 27, cysteine 40, and cysteine 43 each coordinate Zn(2+).

It belongs to the universal ribosomal protein uS14 family. Zinc-binding uS14 subfamily. In terms of assembly, part of the 30S ribosomal subunit. Contacts proteins S3 and S10. The cofactor is Zn(2+).

Its function is as follows. Binds 16S rRNA, required for the assembly of 30S particles and may also be responsible for determining the conformation of the 16S rRNA at the A site. In Streptococcus pyogenes serotype M49 (strain NZ131), this protein is Small ribosomal subunit protein uS14.